Reading from the N-terminus, the 610-residue chain is Solute carrier family 23 member 3 (610 aa).

Over residues 1–16 (MSRSPLNPSQLRSVGS) the composition is skewed to polar residues. Positions 1–32 (MSRSPLNPSQLRSVGSQDALAPLPPPAPQNPS) are disordered. The Cytoplasmic portion of the chain corresponds to 1–49 (MSRSPLNPSQLRSVGSQDALAPLPPPAPQNPSTHSWDPLCGSLPWGLSC). Residues 50–70 (LLALQHVLVMASLLCVSHLLL) form a helical membrane-spanning segment. Over 71–85 (LCSLSPGGLSYSPSQ) the chain is Extracellular. The chain crosses the membrane as a helical span at residues 86-106 (LLASSFFSCGMSTILQTWMGS). The Cytoplasmic segment spans residues 107-164 (RLPLVQAPSLEFLIPALVLTSQKLPRAIQTPGNSSLMLHLCRGPSCHGLGHWNTSLQE). A helical transmembrane segment spans residues 165–185 (VSGAVVVSGLLQGMMGLLGSP). The Extracellular portion of the chain corresponds to 186-187 (GH). Residues 188–208 (VFPHCGPLVLAPSLVVAGLSA) form a helical membrane-spanning segment. Over 209–211 (HRE) the chain is Cytoplasmic. A helical membrane pass occupies residues 212–232 (VAQFCFTHWGLALLVILLMVV). Topologically, residues 233-266 (CSQHLGSCQFHVCPWRRASTSSTHTPLPVFRLLS) are extracellular. Residues 267–287 (VLIPVACVWIVSAFVGFSVIP) traverse the membrane as a helical segment. Over 288–316 (QELSAPTKAPWIWLPHPGEWNWPLLTPRA) the chain is Cytoplasmic. Residues 317–337 (LAAGISMALAASTSSLGCYAL) traverse the membrane as a helical segment. At 338-355 (CGRLLHLPPPPPHACSRG) the chain is on the extracellular side. The helical transmembrane segment at 356–376 (LSLEGLGSVLAGLLGSPMGTA) threads the bilayer. At 377 to 394 (SSFPNVGKVGLIQAGSQQ) the chain is on the cytoplasmic side. Residues 395 to 414 (VAHLVGLLCVGLGLSPRLAQ) form a helical membrane-spanning segment. Residues 415 to 423 (LLTTIPLPV) lie on the Extracellular side of the membrane. A helical membrane pass occupies residues 424-446 (VGGVLGVTQAVVLSAGFSSFYLA). Over 447 to 452 (DIDSGR) the chain is Cytoplasmic. A helical transmembrane segment spans residues 453–472 (NIFIVGFSIFMALLLPRWFR). At 473–486 (EAPVLFSTGWSPLD) the chain is on the extracellular side. A helical transmembrane segment spans residues 487-507 (VLLHSLLTQPIFLAGLSGFLL). Residues 508–610 (ENTIPGTQLE…SSREGFRSQK (103 aa)) lie on the Cytoplasmic side of the membrane. Residues 571 to 610 (PEDPGDEEGGSSEPEEMADLLPGSGEPCPESSREGFRSQK) are disordered. The span at 573-588 (DPGDEEGGSSEPEEMA) shows a compositional bias: acidic residues. The span at 601–610 (SSREGFRSQK) shows a compositional bias: basic and acidic residues.

The protein belongs to the nucleobase:cation symporter-2 (NCS2) (TC 2.A.40) family.

Its subcellular location is the membrane. The enzyme catalyses hypoxanthine(out) + Na(+)(out) = hypoxanthine(in) + Na(+)(in). Functionally, acts as a sodium-dependent hypoxanthine transporter. May show xanthine-hypoxanthine exchange activity. The polypeptide is Solute carrier family 23 member 3 (SLC23A3) (Homo sapiens (Human)).